The chain runs to 544 residues: GMP synthase [glutamine-hydrolyzing] (544 aa).

Residues 12–210 (TILILDFGSQ…VKNVCSVRDG (199 aa)) form the Glutamine amidotransferase type-1 domain. The active-site Nucleophile is the Cys-88. Catalysis depends on residues His-184 and Glu-186. The GMPS ATP-PPase domain maps to 211–419 (WSMESFIPKE…LNIPEHLVGR (209 aa)). 239–245 (SGGVDST) contacts ATP. Arg-312, Asp-481, Lys-536, and Glu-542 together coordinate XMP.

As to quaternary structure, homodimer. Also forms a small population of homotetramers. Requires Mg(2+) as cofactor.

Its subcellular location is the cytoplasm. It is found in the cytosol. It carries out the reaction XMP + L-glutamine + ATP + H2O = GMP + L-glutamate + AMP + diphosphate + 2 H(+). Its pathway is purine metabolism; GMP biosynthesis; GMP from XMP (L-Gln route): step 1/1. Catalyzes the conversion of xanthine monophosphate (XMP) to GMP in the presence of glutamine and ATP through an adenyl-XMP intermediate. The polypeptide is GMP synthase [glutamine-hydrolyzing] (Cryptococcus neoformans var. neoformans serotype D (strain JEC21 / ATCC MYA-565) (Filobasidiella neoformans)).